An 89-amino-acid polypeptide reads, in one-letter code: Small ribosomal subunit protein uS15 (89 aa).

Belongs to the universal ribosomal protein uS15 family. As to quaternary structure, part of the 30S ribosomal subunit. Forms a bridge to the 50S subunit in the 70S ribosome, contacting the 23S rRNA.

One of the primary rRNA binding proteins, it binds directly to 16S rRNA where it helps nucleate assembly of the platform of the 30S subunit by binding and bridging several RNA helices of the 16S rRNA. Functionally, forms an intersubunit bridge (bridge B4) with the 23S rRNA of the 50S subunit in the ribosome. The chain is Small ribosomal subunit protein uS15 from Leuconostoc mesenteroides subsp. mesenteroides (strain ATCC 8293 / DSM 20343 / BCRC 11652 / CCM 1803 / JCM 6124 / NCDO 523 / NBRC 100496 / NCIMB 8023 / NCTC 12954 / NRRL B-1118 / 37Y).